Consider the following 299-residue polypeptide: 33 kDa chaperonin (299 aa).

2 cysteine pairs are disulfide-bonded: Cys-234–Cys-236 and Cys-268–Cys-271.

Belongs to the HSP33 family. Under oxidizing conditions two disulfide bonds are formed involving the reactive cysteines. Under reducing conditions zinc is bound to the reactive cysteines and the protein is inactive.

Its subcellular location is the cytoplasm. Redox regulated molecular chaperone. Protects both thermally unfolding and oxidatively damaged proteins from irreversible aggregation. Plays an important role in the bacterial defense system toward oxidative stress. This is 33 kDa chaperonin from Pseudomonas putida (strain ATCC 700007 / DSM 6899 / JCM 31910 / BCRC 17059 / LMG 24140 / F1).